Reading from the N-terminus, the 142-residue chain is Hemoglobin subunit alpha-A (142 aa).

One can recognise a Globin domain in the interval 2-142; the sequence is VLSAADKTNV…VGAVLTAKYR (141 aa). H59 contributes to the O2 binding site. H88 serves as a coordination point for heme b.

It belongs to the globin family. As to quaternary structure, heterotetramer of two alpha chains and two beta chains. As to expression, red blood cells.

Functionally, involved in oxygen transport from the lung to the various peripheral tissues. The protein is Hemoglobin subunit alpha-A (HBAA) of Anas platyrhynchos (Mallard).